The sequence spans 624 residues: Polygalacturonase 1 beta-like protein 2 (624 aa).

A signal peptide spans 1-26; the sequence is MNNIEATLFLCFFCIFSSSNVHFAGA. The stretch at 121–124 is one FXXY 1 repeat; that stretch reads FAAY. The N-linked (GlcNAc...) asparagine glycan is linked to Asn128. FXXY repeat units lie at residues 129 to 132, 143 to 146, 157 to 160, 171 to 174, 185 to 188, 199 to 202, 213 to 216, 227 to 230, 241 to 244, 255 to 258, and 269 to 272; these read FTNY, FKNY, FRRY, FTTY, FTSY, FSGY, and FTKY. A glycan (N-linked (GlcNAc...) asparagine) is linked at Asn145. The tract at residues 199–219 is disordered; sequence FTNYNTDANEPNGRFTSYSDK. Asn280 carries N-linked (GlcNAc...) asparagine glycosylation. FXXY repeat units follow at residues 283 to 286, 297 to 300, 311 to 314, 325 to 328, and 339 to 342; these read FTSY, FKGY, FKNY, FSSY, and FVNY. Asn352 carries N-linked (GlcNAc...) asparagine glycosylation. The FXXY 18 repeat unit spans residues 353–356; it reads FTGY. Residue Asn364 is glycosylated (N-linked (GlcNAc...) asparagine). 3 FXXY repeats span residues 367 to 370, 376 to 379, and 386 to 389; these read FKTY, FKVY, and FARY. N-linked (GlcNAc...) asparagine glycans are attached at residues Asn392 and Asn463. The BURP domain occupies 409 to 623; that stretch reads FFREAMLKEG…FENDMTWNII (215 aa).

In terms of tissue distribution, expressed in flowers and stems.

Its subcellular location is the secreted. It is found in the extracellular space. It localises to the apoplast. The protein resides in the cell wall. Its function is as follows. Involved in cell size determination. The polypeptide is Polygalacturonase 1 beta-like protein 2 (Arabidopsis thaliana (Mouse-ear cress)).